An 824-amino-acid chain; its full sequence is C-Jun-amino-terminal kinase-interacting protein 2 (824 aa).

Disordered regions lie at residues Met1–Ser28, Ile40–Leu160, Cys172–Trp349, and Glu361–Asp501. Over residues Asp77–Glu110 the composition is skewed to acidic residues. The tract at residues Glu110 to Glu275 is JNK-binding domain (JBD). The span at Leu141–Gly156 shows a compositional bias: polar residues. Residues Gly239 to Ala498 are necessary for interaction with FGF13. Ser254, Ser302, and Ser305 each carry phosphoserine. Low complexity predominate over residues Ile268 to Ser305. A compositionally biased stretch (acidic residues) spans Thr327–Asp346. The span at Ala416–Pro432 shows a compositional bias: pro residues. Positions Ala451–Cys467 are enriched in low complexity. Acidic residues predominate over residues Ser468–Asp484. The region spanning Glu604–Gly665 is the SH3 domain. Positions Pro677–Ala813 constitute a PID domain.

The protein belongs to the JIP scaffold family. As to quaternary structure, forms homo- or heterooligomeric complexes. Binds specific components of the JNK signaling pathway namely JNK1, JNK2, JNK3, MAP2K7, MAP3K10, MAP3K11, MAP3K12 and MAPK13. Also binds the proline-rich domain-containing splice variant of apolipoprotein E receptor 2 (ApoER2). Binds the cytoplasmic tails of LRP1 and LRP2 (Megalin). Binds the TPR motif-containing C-terminal of kinesin light chain, Klc1, pre-assembled MAPK8IP1 scaffolding complexes are then transported as a cargo of kinesin, to the required subcellular location. Interacts with the cytoplasmic domain of APP. Interacts with DCLK2. Interacts with TIAM1 and TIAM2. Interacts with FGF13; enables the interaction with MAPK13 and may regulate the MAPK8IP2 scaffolding activity. Interacts with SH3RF2. Expressed mainly in the brain and pancreas, including insulin-secreting cells. In the nervous system, more abundantly expressed in the cerebellum, pituitary gland, occipital lobe and the amygdala. Also expressed in fetal brain. Very low levels found in uterus, ovary, prostate, colon, testis, adrenal gland, thyroid gland and salivary gland.

The protein resides in the cytoplasm. Its function is as follows. The JNK-interacting protein (JIP) group of scaffold proteins selectively mediates JNK signaling by aggregating specific components of the MAPK cascade to form a functional JNK signaling module. JIP2 inhibits IL1 beta-induced apoptosis in insulin-secreting cells. May function as a regulator of vesicle transport, through interactions with the JNK-signaling components and motor proteins. In Homo sapiens (Human), this protein is C-Jun-amino-terminal kinase-interacting protein 2 (MAPK8IP2).